A 20-amino-acid chain; its full sequence is Antimicrobial peptide AJN-10 (20 aa).

It is found in the secreted. In terms of biological role, displays antimicrobial activity against the Gram-negative bacterium A.hydrophila. The protein is Antimicrobial peptide AJN-10 of Anguilla japonica (Japanese eel).